The primary structure comprises 301 residues: Putative ribosomal RNA methyltransferase PB17E12.10c (301 aa).

Positions 87, 89, 107, and 186 each coordinate S-adenosyl-L-methionine. Lys247 acts as the Proton acceptor in catalysis.

This sequence belongs to the class I-like SAM-binding methyltransferase superfamily. RNA methyltransferase RlmE family.

It catalyses the reaction a uridine in rRNA + S-adenosyl-L-methionine = a 2'-O-methyluridine in rRNA + S-adenosyl-L-homocysteine + H(+). In Schizosaccharomyces pombe (strain 972 / ATCC 24843) (Fission yeast), this protein is Putative ribosomal RNA methyltransferase PB17E12.10c.